Reading from the N-terminus, the 290-residue chain is MPVTVAASRLGTAAFDQSPVELRANYSRDDAQTVIRAVYRQVLGNDYVMSSERLTAAESLFTNGFISVRDFVRAVAQSELYKEKFLYNNFQTRVIELNFKHLLGRAPYDEAEVIEHLDRYQNEGFEADINSYIDSAEYTENFGDNIVPYIRSYVVQTGHRTVGFTRMFSLQRGYANSDRAQIAGNASRLAQELARNTTSAVVGPSGVNEGWAFRSAADDYHPGQSLGGSTGLSADDQVVRVEVAALSTPRYPRIRRSSRVFFVPVSRLSQKLQEIQRMGGRVASISPAGQ.

A PBS-linker domain is found at 1–179; that stretch reads MPVTVAASRL…LQRGYANSDR (179 aa). The CpcD-like domain occupies 236–288; the sequence is DQVVRVEVAALSTPRYPRIRRSSRVFFVPVSRLSQKLQEIQRMGGRVASISPA.

This sequence belongs to the phycobilisome linker protein family.

The protein localises to the cellular thylakoid membrane. In terms of biological role, rod linker protein, associated with phycocyanin. Linker polypeptides determine the state of aggregation and the location of the disk-shaped phycobiliprotein units within the phycobilisome and modulate their spectroscopic properties in order to mediate a directed and optimal energy transfer. In Picosynechococcus sp. (strain ATCC 27264 / PCC 7002 / PR-6) (Agmenellum quadruplicatum), this protein is Phycobilisome 32.3 kDa linker polypeptide, phycocyanin-associated, rod (cpcC).